Consider the following 265-residue polypeptide: Undecaprenyl-diphosphatase (265 aa).

A run of 8 helical transmembrane segments spans residues 1–21 (MDIL…FLPI), 39–59 (QGLA…ILYF), 86–106 (WCII…GNFI), 112–132 (SVSV…FADA), 140–160 (LAQM…LAMI), 186–206 (FSFL…GLKL), 219–239 (VGVL…LSFI), and 244–264 (MLPF…LVWF).

This sequence belongs to the UppP family.

Its subcellular location is the cell inner membrane. The catalysed reaction is di-trans,octa-cis-undecaprenyl diphosphate + H2O = di-trans,octa-cis-undecaprenyl phosphate + phosphate + H(+). Catalyzes the dephosphorylation of undecaprenyl diphosphate (UPP). Confers resistance to bacitracin. This is Undecaprenyl-diphosphatase from Saccharophagus degradans (strain 2-40 / ATCC 43961 / DSM 17024).